The chain runs to 146 residues: MNLQAVSCSFGFLSSPLGVTPRTSFRRFVIRAKTEPSEKSVEIMRKFSEQYARRSGTYFCVDKGVTSVVIKGLAEHKDSYGAPLCPCRHYDDKAAEVGQGFWNCPCVPMRERKECHCMLFLTPDNDFAGKDQTITSDEIKETTANM.

Residues 1–31 (MNLQAVSCSFGFLSSPLGVTPRTSFRRFVIR) constitute a chloroplast transit peptide. Cys-85 serves as a coordination point for [4Fe-4S] cluster. Cys-87 acts as the Nucleophile in catalysis. An intrachain disulfide couples Cys-87 to Cys-117. 3 residues coordinate [4Fe-4S] cluster: Cys-104, Cys-106, and Cys-115.

This sequence belongs to the ferredoxin thioredoxin reductase beta subunit family. As to quaternary structure, heterodimer of subunit A (variable subunit) and subunit B (catalytic subunit). Heterodimeric FTR forms a complex with ferredoxin and thioredoxin. Requires [4Fe-4S] cluster as cofactor.

It localises to the plastid. Its subcellular location is the chloroplast. It catalyses the reaction [thioredoxin]-disulfide + 2 reduced [2Fe-2S]-[ferredoxin] + 2 H(+) = [thioredoxin]-dithiol + 2 oxidized [2Fe-2S]-[ferredoxin]. Its function is as follows. Catalytic subunit of the ferredoxin-thioredoxin reductase (FTR), which catalyzes the two-electron reduction of thioredoxins by the electrons provided by reduced ferredoxin. In Arabidopsis thaliana (Mouse-ear cress), this protein is Ferredoxin-thioredoxin reductase catalytic chain, chloroplastic.